The primary structure comprises 300 residues: Cutinase est2 (300 aa).

Residues 1–39 form the signal peptide; that stretch reads MSVTTPRRETSLLSRALRATAAAATAVVATVALAAPAQA. Tyrosine 99 is a binding site for poly(ethylene terephthalate). The active-site Nucleophile is serine 169. Methionine 170 and tryptophan 194 together coordinate poly(ethylene terephthalate). Position 213 (glutamate 213) interacts with Ca(2+). The active-site Charge relay system is aspartate 215. Position 243 (aspartate 243) interacts with Ca(2+). Histidine 247 functions as the Charge relay system in the catalytic mechanism. Cysteine 280 and cysteine 298 are joined by a disulfide. Glutamate 292 provides a ligand contact to Ca(2+).

Belongs to the AB hydrolase superfamily. As to quaternary structure, monomer. Requires Ca(2+) as cofactor.

The protein localises to the secreted. It is found in the periplasm. It carries out the reaction an acetyl ester + H2O = an aliphatic alcohol + acetate + H(+). The catalysed reaction is (ethylene terephthalate)(n) + H2O = (ethylene terephthalate)(n-1) + 4-[(2-hydroxyethoxy)carbonyl]benzoate + H(+). The enzyme catalyses a butanoate ester + H2O = an aliphatic alcohol + butanoate + H(+). It catalyses the reaction cutin + H2O = cutin monomers.. It carries out the reaction a hexanoate ester + H2O = an aliphatic alcohol + hexanoate + H(+). The catalysed reaction is an octanoate ester + H2O = an aliphatic alcohol + octanoate + H(+). Activated by calcium ions. Activated by magnesium ions. Activated by manganese ions. Inhibited by the serine hydrolase inhibitor phenylmethanesulfonyl fluoride (PMSF). Inhibited by the chelator ethylenediaminetetraacetic acid (EDTA). Inhibited by iron ions. Inhibited by aluminum ions. Inhibited by rubidium ions. Inhibited by lithium ions. Catalyzes the hydrolysis of cutin, a polyester that forms the structure of plant cuticle. Shows esterase activity towards p-nitrophenol-linked aliphatic esters (pNP-aliphatic esters). Capable of degrading the plastic poly(ethylene terephthalate) (PET), the most abundant polyester plastic in the world. Can also depolymerize the synthetic polyesters poly(epsilon-caprolactone) (PCL), poly(butylene succinate-co-adipate) (PBSA), poly(butylene succinate) (PBS), and poly(lactic acid) (PLA). This is Cutinase est2 from Thermobifida alba (Thermomonospora alba).